Here is a 381-residue protein sequence, read N- to C-terminus: Arrestin-C (381 aa).

The protein belongs to the arrestin family. Homodimer; disulfide-linked in response to retinal illumination. Interacts with CXCR4; the interaction is dependent on the C-terminal phosphorylation of CXCR4 and modulates the calcium ion mobilization activity of CXCR4. Interacts with GPR84. In terms of tissue distribution, inner and outer segments, and the inner plexiform regions of the retina.

The protein resides in the photoreceptor inner segment. It localises to the cell projection. It is found in the cilium. Its subcellular location is the photoreceptor outer segment. Its function is as follows. May play a role in an as yet undefined retina-specific signal transduction. Could bind to photoactivated-phosphorylated red/green opsins. This is Arrestin-C (Arr3) from Mus musculus (Mouse).